Here is a 205-residue protein sequence, read N- to C-terminus: Glycerol-3-phosphate acyltransferase (205 aa).

The Periplasmic segment spans residues Met1–Ala3. The helical transmembrane segment at Ile4–Val24 threads the bilayer. The Cytoplasmic portion of the chain corresponds to Cys25–Lys52. The chain crosses the membrane as a helical span at residues Gly53–Ala73. Over Tyr74–Pro80 the chain is Periplasmic. Residues Phe81–Gly101 traverse the membrane as a helical segment. The Cytoplasmic segment spans residues Phe102 to Ala111. The chain crosses the membrane as a helical span at residues Phe112–Leu132. Residues Thr133–Ser137 are Periplasmic-facing. Residues Gly138–Phe158 traverse the membrane as a helical segment. Residues Lys159 to Glu205 are Cytoplasmic-facing.

The protein belongs to the PlsY family. In terms of assembly, probably interacts with PlsX.

The protein localises to the cell inner membrane. It carries out the reaction sn-glycerol 3-phosphate + an acyl-CoA = a 1-acyl-sn-glycero-3-phosphate + CoA. The enzyme catalyses a fatty acyl-[ACP] + sn-glycerol 3-phosphate = a 1-acyl-sn-glycero-3-phosphate + holo-[ACP]. Its pathway is lipid metabolism; phospholipid metabolism. Functionally, catalyzes the transfer of an acyl group from acyl-ACP to glycerol-3-phosphate (G3P) to form lysophosphatidic acid (LPA). This enzyme can also utilize acyl-CoA as fatty acyl donor, but not acyl-PO(4). This is Glycerol-3-phosphate acyltransferase from Shigella flexneri serotype 5b (strain 8401).